The primary structure comprises 130 residues: Albumin-1 C (130 aa).

A signal peptide spans 1 to 26; that stretch reads MASVKLASLIVLFATLGMFLTKNVGA. Cystine bridges form between Cys-29–Cys-46, Cys-33–Cys-48, and Cys-41–Cys-58. 2 propeptides span residues 64–69 and 123–130; these read VFLRTN and LLKSVSTA.

In terms of processing, the C-terminal glycine may be removed from PA1b. As to expression, major component of both the cotyledons and embryonic axes of mature seeds.

Its function is as follows. PA1b binds to basic 7S globulin (BG) and stimulates its phosphorylation activity. Involved in the signal transduction system to regulate the growth and differentiation as a hormone peptide. Toxic to various insects through binding to a high affinity binding site in the insect gut. The chain is Albumin-1 C from Pisum sativum (Garden pea).